A 92-amino-acid chain; its full sequence is Defensin-like protein 96 (92 aa).

A signal peptide spans 1–29 (MGSLRLSTVAIAVVVCLSILLISPTEVDG). 4 disulfides stabilise this stretch: Cys33–Cys80, Cys40–Cys65, Cys49–Cys77, and Cys53–Cys79.

It belongs to the DEFL family.

The protein localises to the secreted. The sequence is that of Defensin-like protein 96 from Arabidopsis thaliana (Mouse-ear cress).